Here is a 486-residue protein sequence, read N- to C-terminus: Probable transporter MCH1 (486 aa).

6 helical membrane-spanning segments follow: residues 31–51, 69–89, 91–111, 132–152, 164–184, and 204–224; these read ISFF…LFSL, FIAS…GYLA, CYGP…SYFV, FGIC…SSLL, LAIS…SQLM, and FFGV…SVVS. Residues 236–260 form a disordered region; it reads EMEEADEESPLMTSRSRHSHHSCED. The helical transmembrane segment at 280–300 threads the bilayer; sequence FINFLKDKSAWLLLASLILNI. A glycan (N-linked (GlcNAc...) asparagine) is linked at N322. 2 consecutive transmembrane segments (helical) span residues 327 to 348 and 357 to 377; these read VSIM…SDYL and ICRV…QFMV. N390 is a glycosylation site (N-linked (GlcNAc...) asparagine). The next 2 membrane-spanning stretches (helical) occupy residues 395–415 and 417–437; these read GGLF…DMMG and TWGS…IFYG. N-linked (GlcNAc...) asparagine glycosylation is present at N457. The chain crosses the membrane as a helical span at residues 458-478; it reads LTAVGLSVSLILIIIVWKGIW.

This sequence belongs to the major facilitator superfamily.

It localises to the vacuole membrane. Its function is as follows. Probable transporter. This Debaryomyces hansenii (strain ATCC 36239 / CBS 767 / BCRC 21394 / JCM 1990 / NBRC 0083 / IGC 2968) (Yeast) protein is Probable transporter MCH1 (MCH1).